We begin with the raw amino-acid sequence, 616 residues long: Chaperone protein HscA (616 aa).

This sequence belongs to the heat shock protein 70 family.

Chaperone involved in the maturation of iron-sulfur cluster-containing proteins. Has a low intrinsic ATPase activity which is markedly stimulated by HscB. Involved in the maturation of IscU. This Salmonella typhimurium (strain LT2 / SGSC1412 / ATCC 700720) protein is Chaperone protein HscA.